The following is a 378-amino-acid chain: Queuine tRNA-ribosyltransferase (378 aa).

Asp-91 serves as the catalytic Proton acceptor. Residues 91–95 (DSGGF), Asp-145, Gln-189, and Gly-216 contribute to the substrate site. The interval 247–253 (GVGKPED) is RNA binding. Asp-266 functions as the Nucleophile in the catalytic mechanism. Residues 271-275 (TRNAR) form an RNA binding; important for wobble base 34 recognition region. Residues Cys-304, Cys-306, Cys-309, and His-335 each contribute to the Zn(2+) site.

It belongs to the queuine tRNA-ribosyltransferase family. Homodimer. Within each dimer, one monomer is responsible for RNA recognition and catalysis, while the other monomer binds to the replacement base PreQ1. Zn(2+) serves as cofactor.

The catalysed reaction is 7-aminomethyl-7-carbaguanine + guanosine(34) in tRNA = 7-aminomethyl-7-carbaguanosine(34) in tRNA + guanine. Its pathway is tRNA modification; tRNA-queuosine biosynthesis. In terms of biological role, catalyzes the base-exchange of a guanine (G) residue with the queuine precursor 7-aminomethyl-7-deazaguanine (PreQ1) at position 34 (anticodon wobble position) in tRNAs with GU(N) anticodons (tRNA-Asp, -Asn, -His and -Tyr). Catalysis occurs through a double-displacement mechanism. The nucleophile active site attacks the C1' of nucleotide 34 to detach the guanine base from the RNA, forming a covalent enzyme-RNA intermediate. The proton acceptor active site deprotonates the incoming PreQ1, allowing a nucleophilic attack on the C1' of the ribose to form the product. After dissociation, two additional enzymatic reactions on the tRNA convert PreQ1 to queuine (Q), resulting in the hypermodified nucleoside queuosine (7-(((4,5-cis-dihydroxy-2-cyclopenten-1-yl)amino)methyl)-7-deazaguanosine). The polypeptide is Queuine tRNA-ribosyltransferase (Vibrio atlanticus (strain LGP32) (Vibrio splendidus (strain Mel32))).